We begin with the raw amino-acid sequence, 194 residues long: Small ribosomal subunit protein uS5 (194 aa).

One can recognise an S5 DRBM domain in the interval 26–89; the sequence is LEEKVVEIRR…ADAKKRIIKV (64 aa).

Belongs to the universal ribosomal protein uS5 family. In terms of assembly, part of the 30S ribosomal subunit. Contacts proteins S4 and S8.

Its function is as follows. With S4 and S12 plays an important role in translational accuracy. Functionally, located at the back of the 30S subunit body where it stabilizes the conformation of the head with respect to the body. The sequence is that of Small ribosomal subunit protein uS5 from Sulfurihydrogenibium sp. (strain YO3AOP1).